Consider the following 348-residue polypeptide: Methylthioribose-1-phosphate isomerase (348 aa).

Residues 54-56 (RGA), Arg-96, and Gln-199 contribute to the substrate site. The active-site Proton donor is Asp-240. 250–251 (NK) contributes to the substrate binding site.

It belongs to the eIF-2B alpha/beta/delta subunits family. MtnA subfamily.

It carries out the reaction 5-(methylsulfanyl)-alpha-D-ribose 1-phosphate = 5-(methylsulfanyl)-D-ribulose 1-phosphate. Its pathway is amino-acid biosynthesis; L-methionine biosynthesis via salvage pathway; L-methionine from S-methyl-5-thio-alpha-D-ribose 1-phosphate: step 1/6. Its function is as follows. Catalyzes the interconversion of methylthioribose-1-phosphate (MTR-1-P) into methylthioribulose-1-phosphate (MTRu-1-P). The polypeptide is Methylthioribose-1-phosphate isomerase (Thioalkalivibrio sulfidiphilus (strain HL-EbGR7)).